The primary structure comprises 954 residues: MDGQLSLLSPTSSSSTSHSRKRLTKKQRPPSANHRTSSSFNVESLRIDAQSLDSKRSASSLRQGPNCNQSPSLARTVSVPVSVPSNAPAHTKASDLSLPRSHTTRSQSANRPYNPTQTIPTNRFILSPASSSQPQTQSPPYPSAVASTTVTSSRNKDTSKQYDPLDSCIGSFDQNKLSTDELIGAPFDGNAILSRIEATKLSAAPAPTSTTTIAHSNNISPRRVAPPPPPPPPALSRSNTDSKAARSSKPSKSPKSTISNKTMGASSFRHSASFSSAEQLPPSEKPSKSESSSSSNKRHSGDGKESRVPGMLRKKSGFSGFMNSLVGSPKKPLISAPENPVHVTHVGYDSNTGQFTGLPKEWQRLISESGITEKDRREHPQILVDVLTFYKETTEKPQEDQQLEKFHDARATDFRSPPVTGTAPLVLQTGVGYAHGPMSPMISPPASPRFPQVGHEGSFENPRAPPPVPKGPGPLPAKDINLIPSRPAPKPPAISTRPLVPPASLPAKDSGIGMPPPGDEAPMPYLPPKDNVQHMYQEEHRNRSRSNSRTNGAAPFSPVQASPLHPIATANQTAAYQQQLLQHQQEQAMAQAQAAMSGQLSRAASKRQQPTPPTSQHQHPRQPDINGAPRMPQTQGAAPQASARPRHRPRQSNAIDVVASLKRICSDGDPREIYRGFTKIGQGASGGVYTGHERGSNRLVAIKQMNLEQQPKKDLIINEILVMKESSHPNIVNFIDSYLCAGELWVVMEYMEGGSLTDVVTFNIMTEGQIASVCRETLRGLQHLHSKGVIHRDIKSDNILLSMEGNIKLTDFGFCATINEAQSKRTTMVGTPYWMAPEVVTRKEYGRKVDIWSLGIMAIEMIEGEPPYLTESPLRALWLIATNGTPHIKDEQSLSPVFRDFLYFALKVDPEKRASAHDLLRHDFMNKCVDLSTLAPLVRAAREARAQEKARKGQ.

Over residues 1-17 (MDGQLSLLSPTSSSSTS) the composition is skewed to low complexity. 2 disordered regions span residues 1–165 (MDGQ…YDPL) and 203–316 (AAPA…RKKS). Positions 18-28 (HSRKRLTKKQR) are enriched in basic residues. Polar residues-rich tracts occupy residues 33 to 42 (NHRTSSSFNV), 57 to 75 (SASS…SLAR), and 100 to 121 (RSHT…TIPT). Low complexity-rich tracts occupy residues 127-136 (SPASSSQPQT), 143-153 (SAVASTTVTSS), and 203-214 (AAPAPTSTTTIA). Residues 224–234 (VAPPPPPPPPA) are compositionally biased toward pro residues. Composition is skewed to low complexity over residues 245 to 256 (ARSSKPSKSPKS) and 265 to 277 (ASSF…FSSA). The CRIB domain occupies 334 to 347 (ISAPENPVHVTHVG). 2 disordered regions span residues 440 to 562 (PMIS…VQAS) and 587 to 655 (QAMA…SNAI). 2 stretches are compositionally biased toward pro residues: residues 463 to 475 (RAPP…PGPL) and 514 to 527 (MPPP…PYLP). Residues 674-925 (YRGFTKIGQG…AHDLLRHDFM (252 aa)) enclose the Protein kinase domain. ATP contacts are provided by residues 680–688 (IGQGASGGV) and Lys-703. The Proton acceptor role is filled by Asp-793.

It belongs to the protein kinase superfamily. STE Ser/Thr protein kinase family. STE20 subfamily.

The protein localises to the cytoplasm. The protein resides in the nucleus. The catalysed reaction is L-seryl-[protein] + ATP = O-phospho-L-seryl-[protein] + ADP + H(+). It catalyses the reaction L-threonyl-[protein] + ATP = O-phospho-L-threonyl-[protein] + ADP + H(+). Its function is as follows. MAP4K component of the MAPK pathway required for the mating pheromone response and the regulation of cell polarity and cell cycle. Phosphorylates histone H2B to form H2BS10ph. The sequence is that of Serine/threonine-protein kinase ste20 (stk-4) from Neurospora crassa (strain ATCC 24698 / 74-OR23-1A / CBS 708.71 / DSM 1257 / FGSC 987).